The chain runs to 552 residues: Hydroxylamine reductase (552 aa).

[4Fe-4S] cluster-binding residues include cysteine 3, cysteine 6, cysteine 15, and cysteine 21. The hybrid [4Fe-2O-2S] cluster site is built by histidine 247, glutamate 271, cysteine 315, cysteine 407, cysteine 435, cysteine 460, glutamate 495, and lysine 497. Cysteine 407 is subject to Cysteine persulfide.

Belongs to the HCP family. [4Fe-4S] cluster is required as a cofactor. Hybrid [4Fe-2O-2S] cluster serves as cofactor.

It localises to the cytoplasm. The catalysed reaction is A + NH4(+) + H2O = hydroxylamine + AH2 + H(+). Functionally, catalyzes the reduction of hydroxylamine to form NH(3) and H(2)O. The protein is Hydroxylamine reductase of Thermosipho melanesiensis (strain DSM 12029 / CIP 104789 / BI429).